Consider the following 528-residue polypeptide: Bifunctional dihydrofolate reductase-thymidylate synthase (528 aa).

The interval 1–20 is disordered; it reads MASELLANPTNGSGITRPDP. Positions 23–200 constitute a DHFR domain; it reads TYQVVVAATQ…IRYCFTTYVR (178 aa). V27 lines the substrate pocket. NADP(+) is bound by residues A29 and 35–41; that span reads GIGKDGK. Position 49 (D49) interacts with substrate. Residues 73 to 75 and 94 to 97 contribute to the NADP(+) site; these read RKT and LTRS. Residues I136, Y142, and T157 each contribute to the substrate site. Residue 137–144 participates in NADP(+) binding; it reads GGGQIYRE. A thymidylate synthase region spans residues 202–528; it reads RNSVAELTSQ…HQKIEMKMAV (327 aa). R264 is a dUMP binding site. Residue C409 is part of the active site. DUMP contacts are provided by residues H410, 428 to 432, N440, and 470 to 472; these read QRSAD and HVY.

In the N-terminal section; belongs to the dihydrofolate reductase family. The protein in the C-terminal section; belongs to the thymidylate synthase family.

The catalysed reaction is (6S)-5,6,7,8-tetrahydrofolate + NADP(+) = 7,8-dihydrofolate + NADPH + H(+). It catalyses the reaction dUMP + (6R)-5,10-methylene-5,6,7,8-tetrahydrofolate = 7,8-dihydrofolate + dTMP. It functions in the pathway cofactor biosynthesis; tetrahydrofolate biosynthesis; 5,6,7,8-tetrahydrofolate from 7,8-dihydrofolate: step 1/1. Its function is as follows. Bifunctional enzyme. Involved in de novo dTMP biosynthesis. Key enzyme in folate metabolism. Can play two different roles depending on the source of dihydrofolate: de novo synthesis of tetrahydrofolate or recycling of the dihydrofolate released as one of the end products of the TS catalyzed reaction. Catalyzes an essential reaction for de novo glycine and purine synthesis, DNA precursor synthesis, and for the conversion of dUMP to dTMP. The chain is Bifunctional dihydrofolate reductase-thymidylate synthase from Daucus carota (Wild carrot).